Reading from the N-terminus, the 275-residue chain is Light-independent protochlorophyllide reductase iron-sulfur ATP-binding protein (275 aa).

Residues 12-17 (GIGKST) and Lys41 contribute to the ATP site. Mg(2+) is bound at residue Ser16. [4Fe-4S] cluster is bound by residues Cys97 and Cys131. 182 to 183 (NR) contributes to the ATP binding site.

Belongs to the NifH/BchL/ChlL family. As to quaternary structure, homodimer. Protochlorophyllide reductase is composed of three subunits; BchL, BchN and BchB. [4Fe-4S] cluster is required as a cofactor.

It catalyses the reaction chlorophyllide a + oxidized 2[4Fe-4S]-[ferredoxin] + 2 ADP + 2 phosphate = protochlorophyllide a + reduced 2[4Fe-4S]-[ferredoxin] + 2 ATP + 2 H2O. The protein operates within porphyrin-containing compound metabolism; bacteriochlorophyll biosynthesis (light-independent). Its function is as follows. Component of the dark-operative protochlorophyllide reductase (DPOR) that uses Mg-ATP and reduced ferredoxin to reduce ring D of protochlorophyllide (Pchlide) to form chlorophyllide a (Chlide). This reaction is light-independent. The L component serves as a unique electron donor to the NB-component of the complex, and binds Mg-ATP. The protein is Light-independent protochlorophyllide reductase iron-sulfur ATP-binding protein of Prosthecochloris aestuarii (strain DSM 271 / SK 413).